The following is a 242-amino-acid chain: Probable transcriptional regulatory protein lp_2253 (242 aa).

Residues 1–21 (MSGHSKWHNIQGRKNAQDAKR) form a disordered region.

It belongs to the TACO1 family.

Its subcellular location is the cytoplasm. The polypeptide is Probable transcriptional regulatory protein lp_2253 (Lactiplantibacillus plantarum (strain ATCC BAA-793 / NCIMB 8826 / WCFS1) (Lactobacillus plantarum)).